A 239-amino-acid chain; its full sequence is Zinc finger protein 575 (239 aa).

The interval 1–62 (MLGGSVKSEV…PQRPHRCPDC (62 aa)) is disordered. Residues 22–31 (PETKAPHQDL) are compositionally biased toward basic and acidic residues. The span at 46 to 57 (RPRRRPPPQRPH) shows a compositional bias: basic residues. C2H2-type zinc fingers lie at residues 57 to 79 (HRCP…RLAH), 85 to 107 (HPCP…RLTH), 113 to 135 (HSCP…LWTH), 141 to 163 (YPCP…RHTH), 171 to 193 (YPCP…RLCH), and 207 to 230 (HRCS…RSHH).

The protein belongs to the krueppel C2H2-type zinc-finger protein family.

Its subcellular location is the nucleus. May be involved in transcriptional regulation. The chain is Zinc finger protein 575 (Znf575) from Mus musculus (Mouse).